The sequence spans 429 residues: CinA-like protein (429 aa).

The protein belongs to the CinA family.

The sequence is that of CinA-like protein from Chlorobium limicola (strain DSM 245 / NBRC 103803 / 6330).